The sequence spans 199 residues: FMN-dependent NADH:quinone oxidoreductase 4 (199 aa).

FMN is bound by residues S10, 95-98 (MYNL), and 139-142 (SRGG).

It belongs to the azoreductase type 1 family. In terms of assembly, homodimer. Requires FMN as cofactor.

The catalysed reaction is 2 a quinone + NADH + H(+) = 2 a 1,4-benzosemiquinone + NAD(+). The enzyme catalyses N,N-dimethyl-1,4-phenylenediamine + anthranilate + 2 NAD(+) = 2-(4-dimethylaminophenyl)diazenylbenzoate + 2 NADH + 2 H(+). Quinone reductase that provides resistance to thiol-specific stress caused by electrophilic quinones. In terms of biological role, also exhibits azoreductase activity. Catalyzes the reductive cleavage of the azo bond in aromatic azo compounds to the corresponding amines. The sequence is that of FMN-dependent NADH:quinone oxidoreductase 4 from Burkholderia lata (strain ATCC 17760 / DSM 23089 / LMG 22485 / NCIMB 9086 / R18194 / 383).